The following is a 219-amino-acid chain: HTH-type transcriptional activator FasR (219 aa).

The tract at residues 1–30 (MSDLANTAERRGEKRPAGGNRRGNRLPRDE) is disordered. Residues 29 to 89 (DERRGQLLIA…AVLQRHVDNL (61 aa)) form the HTH tetR-type domain. Positions 52–71 (GMDEIADRAGVSKPVLYQHF) form a DNA-binding region, H-T-H motif.

In terms of assembly, homodimer.

Its activity is regulated as follows. FasR:DNA binding is regulated by long-chain acyl-CoAs (C14- to C26-CoA), which act as effector molecules that modulate the affinity of FasR for its DNA binding sequences and therefore modulate the expression of the essential fas-acpS operon. Its function is as follows. Transcriptional activator that plays a central role in sensing mycobacterial long-chain fatty acids and regulating lipid biosynthesis. Activates the expression of the genes encoding the fatty acid synthase (fas) and the 4-phosphopantetheinyl transferase (acpS), whose products are involved in the fatty acid and mycolic acid biosynthesis. Specifically binds to three conserved operator sequences present in the fas-acpS promoter region. Essential for M.smegmatis viability. This is HTH-type transcriptional activator FasR from Mycolicibacterium smegmatis (strain ATCC 700084 / mc(2)155) (Mycobacterium smegmatis).